Here is a 239-residue protein sequence, read N- to C-terminus: tRNA (guanine-N(7)-)-methyltransferase (239 aa).

Positions 69, 94, 121, and 144 each coordinate S-adenosyl-L-methionine. The active site involves D144. K148 provides a ligand contact to substrate. Positions 150–155 are interaction with RNA; it reads RHNKRR. Substrate-binding positions include D180 and 217-220; that span reads TKFE.

Belongs to the class I-like SAM-binding methyltransferase superfamily. TrmB family. Monomer.

It carries out the reaction guanosine(46) in tRNA + S-adenosyl-L-methionine = N(7)-methylguanosine(46) in tRNA + S-adenosyl-L-homocysteine. It functions in the pathway tRNA modification; N(7)-methylguanine-tRNA biosynthesis. Catalyzes the formation of N(7)-methylguanine at position 46 (m7G46) in tRNA. The polypeptide is tRNA (guanine-N(7)-)-methyltransferase (Serratia proteamaculans (strain 568)).